Reading from the N-terminus, the 443-residue chain is 5-methylthioadenosine/S-adenosylhomocysteine deaminase 1 (443 aa).

Residues His69 and His71 each coordinate Zn(2+). 2 residues coordinate substrate: Glu98 and His191. Position 218 (His218) interacts with Zn(2+). Substrate is bound by residues Glu221 and Asp306. Asp306 lines the Zn(2+) pocket.

This sequence belongs to the metallo-dependent hydrolases superfamily. MTA/SAH deaminase family. Zn(2+) serves as cofactor.

The catalysed reaction is S-adenosyl-L-homocysteine + H2O + H(+) = S-inosyl-L-homocysteine + NH4(+). It catalyses the reaction S-methyl-5'-thioadenosine + H2O + H(+) = S-methyl-5'-thioinosine + NH4(+). In terms of biological role, catalyzes the deamination of 5-methylthioadenosine and S-adenosyl-L-homocysteine into 5-methylthioinosine and S-inosyl-L-homocysteine, respectively. Is also able to deaminate adenosine. In Syntrophus aciditrophicus (strain SB), this protein is 5-methylthioadenosine/S-adenosylhomocysteine deaminase 1.